A 456-amino-acid chain; its full sequence is CBL-interacting protein kinase 9 (456 aa).

Residues 27 to 282 (YELGKTIGEG…IAQILEDDWF (256 aa)) form the Protein kinase domain. ATP is bound by residues 33–41 (IGEGSFAKV) and Lys56. Asp150 serves as the catalytic Proton acceptor. The tract at residues 168-197 (DFGLSAFAPQTKEDGLLHTACGTPNYVAPE) is activation loop. The 26-residue stretch at 318–343 (REKPESMNAFALISRSQGFNLGNLFE) folds into the NAF domain. The interval 351–380 (KRETSFTSQCTPQEIMSKIEEACGPLGFNV) is PPI.

This sequence belongs to the protein kinase superfamily. CAMK Ser/Thr protein kinase family. SNF1 subfamily. Mn(2+) serves as cofactor.

It catalyses the reaction L-seryl-[protein] + ATP = O-phospho-L-seryl-[protein] + ADP + H(+). The enzyme catalyses L-threonyl-[protein] + ATP = O-phospho-L-threonyl-[protein] + ADP + H(+). In terms of biological role, CIPK serine-threonine protein kinases interact with CBL proteins. Binding of a CBL protein to the regulatory NAF domain of CIPK protein lead to the activation of the kinase in a calcium-dependent manner. The chain is CBL-interacting protein kinase 9 (CIPK9) from Oryza sativa subsp. japonica (Rice).